Consider the following 294-residue polypeptide: Acetyl-coenzyme A carboxylase carboxyl transferase subunit beta (294 aa).

One can recognise a CoA carboxyltransferase N-terminal domain in the interval 25–294; sequence VWTKCTSCEQ…PLVVPVDGSH (270 aa). Zn(2+) is bound by residues Cys-29, Cys-32, Cys-48, and Cys-51. Residues 29–51 form a C4-type zinc finger; it reads CTSCEQVLYSAELERNLEVCPKC.

Belongs to the AccD/PCCB family. As to quaternary structure, acetyl-CoA carboxylase is a heterohexamer composed of biotin carboxyl carrier protein (AccB), biotin carboxylase (AccC) and two subunits each of ACCase subunit alpha (AccA) and ACCase subunit beta (AccD). It depends on Zn(2+) as a cofactor.

It localises to the cytoplasm. It carries out the reaction N(6)-carboxybiotinyl-L-lysyl-[protein] + acetyl-CoA = N(6)-biotinyl-L-lysyl-[protein] + malonyl-CoA. It functions in the pathway lipid metabolism; malonyl-CoA biosynthesis; malonyl-CoA from acetyl-CoA: step 1/1. Component of the acetyl coenzyme A carboxylase (ACC) complex. Biotin carboxylase (BC) catalyzes the carboxylation of biotin on its carrier protein (BCCP) and then the CO(2) group is transferred by the transcarboxylase to acetyl-CoA to form malonyl-CoA. In Aliivibrio fischeri (strain MJ11) (Vibrio fischeri), this protein is Acetyl-coenzyme A carboxylase carboxyl transferase subunit beta.